We begin with the raw amino-acid sequence, 122 residues long: Large ribosomal subunit protein uL14 (122 aa).

Belongs to the universal ribosomal protein uL14 family. In terms of assembly, part of the 50S ribosomal subunit. Forms a cluster with proteins L3 and L19. In the 70S ribosome, L14 and L19 interact and together make contacts with the 16S rRNA in bridges B5 and B8.

Its function is as follows. Binds to 23S rRNA. Forms part of two intersubunit bridges in the 70S ribosome. In Janthinobacterium sp. (strain Marseille) (Minibacterium massiliensis), this protein is Large ribosomal subunit protein uL14.